We begin with the raw amino-acid sequence, 174 residues long: NADH-ubiquinone oxidoreductase chain 6 (174 aa).

6 helical membrane passes run 1–21, 24–44, 47–67, 86–106, 111–131, and 151–171; these read MTYA…GFSS, SPIY…AVIL, GGGY…MVVF, AEVL…VLWV, GVVV…EGEG, and WLVV…IEIA.

Belongs to the complex I subunit 6 family. In terms of assembly, core subunit of respiratory chain NADH dehydrogenase (Complex I) which is composed of 45 different subunits.

It localises to the mitochondrion inner membrane. It carries out the reaction a ubiquinone + NADH + 5 H(+)(in) = a ubiquinol + NAD(+) + 4 H(+)(out). In terms of biological role, core subunit of the mitochondrial membrane respiratory chain NADH dehydrogenase (Complex I) which catalyzes electron transfer from NADH through the respiratory chain, using ubiquinone as an electron acceptor. Essential for the catalytic activity and assembly of complex I. The chain is NADH-ubiquinone oxidoreductase chain 6 (MT-ND6) from Pongo pygmaeus (Bornean orangutan).